The primary structure comprises 447 residues: ATP-dependent protease ATPase subunit HslU (447 aa).

Residues Ile-18, 60–65 (GVGKTE), Asp-259, Glu-325, and Arg-397 contribute to the ATP site.

This sequence belongs to the ClpX chaperone family. HslU subfamily. In terms of assembly, a double ring-shaped homohexamer of HslV is capped on each side by a ring-shaped HslU homohexamer. The assembly of the HslU/HslV complex is dependent on binding of ATP.

The protein resides in the cytoplasm. Its function is as follows. ATPase subunit of a proteasome-like degradation complex; this subunit has chaperone activity. The binding of ATP and its subsequent hydrolysis by HslU are essential for unfolding of protein substrates subsequently hydrolyzed by HslV. HslU recognizes the N-terminal part of its protein substrates and unfolds these before they are guided to HslV for hydrolysis. This is ATP-dependent protease ATPase subunit HslU from Burkholderia ambifaria (strain MC40-6).